The sequence spans 280 residues: MTASDPSVLSKPATGDTSFVVVIPARYQSSRLPGKVLADIDGKPMIQWVVEKAQLSGARQVIVATDNDEVAAVVNSFGAEVCKTRADHQSGTERLAEVMEKYQFSDDEIIVNVQGDEPFIPPDNIAQVANNLANQQQSSHVARMSTLAINIDSVDEAFNPNAVKVILDKDGYALYFSRATIPYDRERFLNSDATTEENIRAIGDFYLRHVGIYAYRAGFIKDYVNWPTSELEQVEALEQLRVLYQGERIHVAVANSHVPVEGVDTPEDLAKARAYATSLV.

It belongs to the KdsB family.

It is found in the cytoplasm. The catalysed reaction is 3-deoxy-alpha-D-manno-oct-2-ulosonate + CTP = CMP-3-deoxy-beta-D-manno-octulosonate + diphosphate. The protein operates within nucleotide-sugar biosynthesis; CMP-3-deoxy-D-manno-octulosonate biosynthesis; CMP-3-deoxy-D-manno-octulosonate from 3-deoxy-D-manno-octulosonate and CTP: step 1/1. It participates in bacterial outer membrane biogenesis; lipopolysaccharide biosynthesis. Functionally, activates KDO (a required 8-carbon sugar) for incorporation into bacterial lipopolysaccharide in Gram-negative bacteria. In Colwellia psychrerythraea (strain 34H / ATCC BAA-681) (Vibrio psychroerythus), this protein is 3-deoxy-manno-octulosonate cytidylyltransferase.